We begin with the raw amino-acid sequence, 801 residues long: Potassium transporter 1 (801 aa).

A disordered region spans residues 1–20; that stretch reads MSSALEVEGSGSPGVEPAAT. Residues 1–57 lie on the Cytoplasmic side of the membrane; that stretch reads MSSALEVEGSGSPGVEPAATATASRLKRHDSLFGDAEKVSGGKHHGGSAVSWAVTLH. Residues 58-80 traverse the membrane as a helical segment; sequence LAFQSVGIIYGDIGTSPLYVYSS. Residues 81–94 are Extracellular-facing; that stretch reads TFPDGIGHRDDLVG. A helical transmembrane segment spans residues 95 to 115; the sequence is VLSLILYTLIIIPMLKYVFIV. The Cytoplasmic portion of the chain corresponds to 116-181; that stretch reads LYANDNGDGG…HKLESSRAAK (66 aa). Residues 182–202 form a helical membrane-spanning segment; sequence MALFFLTILGTSMVMGDGTLT. The Extracellular portion of the chain corresponds to 203–219; sequence PAISVLSAVSGIREKAP. Residues 220–240 form a helical membrane-spanning segment; the sequence is NLTQTQVVLISVAILFMLFSV. Residues 241 to 247 are Cytoplasmic-facing; the sequence is QRFGTDK. A helical transmembrane segment spans residues 248–268; the sequence is VGYTFAPIISVWFLLIAGIGL. The Extracellular segment spans residues 269–298; that stretch reads YNLVVHEITILKAFNPWYIVQYFRRNGKKG. A helical membrane pass occupies residues 299–319; sequence WVSLGGVVLCVTGTEGMFADL. Topologically, residues 320–328 are cytoplasmic; sequence GHFNIRAVQ. The helical transmembrane segment at 329 to 349 threads the bilayer; that stretch reads ISFNCILFPSVALCYIGQAAY. At 350-375 the chain is on the extracellular side; it reads LRKFPENVSDTFYKSIPGKYRDRLNF. Residues 376–398 traverse the membrane as a helical segment; that stretch reads GPLFWPTFIVAILAAIIASQAML. Over 399–429 the chain is Cytoplasmic; it reads SGAFAILSKALSLGCLPRVRVIHTSKKYEGQ. A helical membrane pass occupies residues 430–450; the sequence is VYIPEVNFMMGLASIIVTIAF. Residues 451–461 lie on the Extracellular side of the membrane; it reads RTTTSIGNAYG. The chain crosses the membrane as a helical span at residues 462–482; the sequence is ICVVTTFMVTTHLMTVVMLLI. Over 483–487 the chain is Cytoplasmic; it reads WKKHL. A helical transmembrane segment spans residues 488–508; the sequence is VFILLFYCVFGFTEVVYLSSI. The Extracellular segment spans residues 509 to 511; that stretch reads LSK. Residues 512–532 traverse the membrane as a helical segment; it reads FVDGGYLPFCFAMVLMTMMAT. At 533-801 the chain is on the cytoplasmic side; it reads WHYVHVRRYW…LLKVGITYEI (269 aa). The segment at 679–728 is disordered; that stretch reads DDDDEAAARPRRSTSSAVHSEEAIQAASSGRTTASSVQLQAGGEPPAAMD. A compositionally biased stretch (polar residues) spans 704–717; sequence AASSGRTTASSVQL.

It belongs to the HAK/KUP transporter (TC 2.A.72.3) family. Expressed almost exclusively in roots.

The protein localises to the cell membrane. Its function is as follows. High-affinity potassium transporter. Also transports rubidium, with the same affinity and cesium, with a lower affinity. The chain is Potassium transporter 1 (HAK1) from Oryza sativa subsp. japonica (Rice).